The sequence spans 144 residues: Transcription antitermination protein NusB (144 aa).

Belongs to the NusB family.

Involved in transcription antitermination. Required for transcription of ribosomal RNA (rRNA) genes. Binds specifically to the boxA antiterminator sequence of the ribosomal RNA (rrn) operons. This is Transcription antitermination protein NusB from Streptococcus thermophilus (strain CNRZ 1066).